Consider the following 263-residue polypeptide: Chymotrypsinogen B (263 aa).

The N-terminal stretch at 1-18 (MASLWLLSCFSLVGAAFG) is a signal peptide. Disulfide bonds link cysteine 19-cysteine 140, cysteine 60-cysteine 76, cysteine 154-cysteine 219, cysteine 186-cysteine 200, and cysteine 209-cysteine 238. In terms of domain architecture, Peptidase S1 spans 34-261 (IVNGEDAVPG…LIPWVQKILA (228 aa)). Catalysis depends on histidine 75, which acts as the Charge relay system. Serine 93 bears the Phosphoserine mark. Aspartate 120 functions as the Charge relay system in the catalytic mechanism. The active-site Charge relay system is serine 213.

This sequence belongs to the peptidase S1 family.

It localises to the secreted. The protein resides in the extracellular space. It catalyses the reaction Preferential cleavage: Tyr-|-Xaa, Trp-|-Xaa, Phe-|-Xaa, Leu-|-Xaa.. The protein is Chymotrypsinogen B of Homo sapiens (Human).